A 508-amino-acid chain; its full sequence is Heat shock 70 kDa protein 14 (508 aa).

It belongs to the heat shock protein 70 family. As to quaternary structure, component of ribosome-associated complex (RAC).

Its subcellular location is the cytoplasm. It is found in the cytosol. In terms of biological role, component of the ribosome-associated complex (RAC), a complex involved in folding or maintaining nascent polypeptides in a folding-competent state. The sequence is that of Heat shock 70 kDa protein 14 (hspa14) from Xenopus tropicalis (Western clawed frog).